A 429-amino-acid chain; its full sequence is Threonine synthase (429 aa).

Lysine 107 carries the N6-(pyridoxal phosphate)lysine modification.

This sequence belongs to the threonine synthase family. The cofactor is pyridoxal 5'-phosphate.

It catalyses the reaction O-phospho-L-homoserine + H2O = L-threonine + phosphate. It functions in the pathway amino-acid biosynthesis; L-threonine biosynthesis; L-threonine from L-aspartate: step 5/5. Catalyzes the gamma-elimination of phosphate from L-phosphohomoserine and the beta-addition of water to produce L-threonine. This is Threonine synthase (thrC) from Serratia marcescens.